Reading from the N-terminus, the 231-residue chain is Large ribosomal subunit protein uL1 (231 aa).

The protein belongs to the universal ribosomal protein uL1 family. As to quaternary structure, part of the 50S ribosomal subunit.

Functionally, binds directly to 23S rRNA. The L1 stalk is quite mobile in the ribosome, and is involved in E site tRNA release. Protein L1 is also a translational repressor protein, it controls the translation of the L11 operon by binding to its mRNA. In Beijerinckia indica subsp. indica (strain ATCC 9039 / DSM 1715 / NCIMB 8712), this protein is Large ribosomal subunit protein uL1.